A 99-amino-acid chain; its full sequence is Accessory protein p12I (99 aa).

The chain crosses the membrane as a helical span at residues Phe-3 to Pro-23. 2 short sequence motifs (SH3-binding) span residues Arg-4 to Pro-11 and Arg-33 to Pro-38. The helical transmembrane segment at Ile-48 to Leu-68 threads the bilayer. Short sequence motifs (SH3-binding) lie at residues Pro-70–Arg-77 and Lys-88–Pro-93. Lys-88 participates in a covalent cross-link: Glycyl lysine isopeptide (Lys-Gly) (interchain with G-Cter in ubiquitin); in isolate LAF.

Belongs to the HTLV-1 accessory protein p12I family. In terms of assembly, p12I is a homodimer. Interacts with human CANX, CALR, ATP6V0C, IL2RB, IL2RG. Binds to MHC-I heavy chains HLA-A2, HLA-B7 and HLA-Cw4. Ubiquitinated; a fraction of P12I is degraded via the ubiquitin system.

It is found in the host endoplasmic reticulum membrane. The protein localises to the host Golgi apparatus. The protein resides in the host cis-Golgi network membrane. Its function is as follows. p12I is a modulator of T-lymphocyte proliferation and immune function and may contribute to establish a persistent infection. Binds and down-modulates cell surface expression of interleukin-2 receptors IL2RB and IL2RG. Also down-modulates cell surface MHC-I molecules by binding to free immature MHC-I heavy chains in the ER and targeting them to the proteasome for degradation. Binding to IL2RB mediates recruitment of JAK1 and JAK3. As a result of this interaction, p12I increases DNA-binding and transcriptional activity of STAT5. The chain is Accessory protein p12I from Homo sapiens (Human).